Reading from the N-terminus, the 579-residue chain is CTP synthase (579 aa).

The segment at 1-281 (MPALRKHPQT…DAYVVRRLNL (281 aa)) is amidoligase domain. Residue S23 coordinates CTP. S23 serves as a coordination point for UTP. Residues 24–29 (SLGKGL) and D81 each bind ATP. Residues D81 and E155 each coordinate Mg(2+). Residues 162-164 (DIE), 202-207 (KTKPTQ), and K238 contribute to the CTP site. UTP-binding positions include 202–207 (KTKPTQ) and K238. The Glutamine amidotransferase type-1 domain maps to 306 to 554 (RIALVGKYID…IGAALDYKAA (249 aa)). G369 lines the L-glutamine pocket. The active-site Nucleophile; for glutamine hydrolysis is the C396. Residues 397-400 (LGLQ), E419, and R480 each bind L-glutamine. Catalysis depends on residues H527 and E529.

It belongs to the CTP synthase family. As to quaternary structure, homotetramer.

The catalysed reaction is UTP + L-glutamine + ATP + H2O = CTP + L-glutamate + ADP + phosphate + 2 H(+). The enzyme catalyses L-glutamine + H2O = L-glutamate + NH4(+). It carries out the reaction UTP + NH4(+) + ATP = CTP + ADP + phosphate + 2 H(+). It functions in the pathway pyrimidine metabolism; CTP biosynthesis via de novo pathway; CTP from UDP: step 2/2. With respect to regulation, allosterically activated by GTP, when glutamine is the substrate; GTP has no effect on the reaction when ammonia is the substrate. The allosteric effector GTP functions by stabilizing the protein conformation that binds the tetrahedral intermediate(s) formed during glutamine hydrolysis. Inhibited by the product CTP, via allosteric rather than competitive inhibition. Catalyzes the ATP-dependent amination of UTP to CTP with either L-glutamine or ammonia as the source of nitrogen. Regulates intracellular CTP levels through interactions with the four ribonucleotide triphosphates. The sequence is that of CTP synthase from Mycobacterium sp. (strain JLS).